A 323-amino-acid chain; its full sequence is Phosphatidylglycerol--prolipoprotein diacylglyceryl transferase (323 aa).

3 consecutive transmembrane segments (helical) span residues 15-35 (VIQGIPITWYSLSYIFIILIS), 58-78 (FMFSLVLGAILGGRLASTLVY), and 106-126 (GMAIHGGFLGAIIAPLITINT). Arg-156 is a binding site for a 1,2-diacyl-sn-glycero-3-phospho-(1'-sn-glycerol). 2 helical membrane-spanning segments follow: residues 242–262 (GFIFGVYIMLYAFFRFFIEYL) and 289–309 (ISMGQILSLALMLSGLIWIIV).

Belongs to the Lgt family.

It is found in the cell inner membrane. It carries out the reaction L-cysteinyl-[prolipoprotein] + a 1,2-diacyl-sn-glycero-3-phospho-(1'-sn-glycerol) = an S-1,2-diacyl-sn-glyceryl-L-cysteinyl-[prolipoprotein] + sn-glycerol 1-phosphate + H(+). The protein operates within protein modification; lipoprotein biosynthesis (diacylglyceryl transfer). In terms of biological role, catalyzes the transfer of the diacylglyceryl group from phosphatidylglycerol to the sulfhydryl group of the N-terminal cysteine of a prolipoprotein, the first step in the formation of mature lipoproteins. The sequence is that of Phosphatidylglycerol--prolipoprotein diacylglyceryl transferase from Borreliella afzelii (strain PKo) (Borrelia afzelii).